Reading from the N-terminus, the 437-residue chain is Probable N-acetylmuramidase (437 aa).

An N-terminal signal peptide occupies residues 1–57; sequence MPVSRVKVKNRHLKKKTKKPLAFYKPATKFAGAVLIAGTLTTTHELLLQQTSPMVQA. Disordered stretches follow at residues 217-244, 290-320, and 367-392; these read SSAGNTNSGGSTTTITNNNSGTNSSSTT, ASSTNSGGSNNSASTTPTTSVTPAKPTSQTT, and AASNPSTGSGSTATNNSNSTSSNSNA. A LysM 1 domain is found at 243-286; that stretch reads TTYTVKSGDTLWGISQRYGISVAQIQSANNLKSTIIYIGQKLVL. Residues 290 to 317 show a composition bias toward low complexity; the sequence is ASSTNSGGSNNSASTTPTTSVTPAKPTS. A LysM 2 domain is found at 319–362; the sequence is TTVKVKSGDTLWALSVKYKTSIAQLKSWNHLSSDTIYIGQNLIV. One can recognise a LysM 3 domain in the interval 393–436; that stretch reads SIHKVVKGDTLWGLSQKSGSPIASIKAWNHLSSDTILIGQYLRI.

The protein belongs to the glycosyl hydrolase 73 family.

The protein localises to the secreted. The enzyme catalyses Hydrolysis of (1-&gt;4)-beta-linkages between N-acetylmuramic acid and N-acetyl-D-glucosamine residues in a peptidoglycan and between N-acetyl-D-glucosamine residues in chitodextrins.. Its function is as follows. Hydrolyzes the cell wall of L.lactis and M.lysodeikticus. Required for cell separation during growth. The polypeptide is Probable N-acetylmuramidase (acmA) (Lactococcus lactis subsp. cremoris (strain MG1363)).